A 213-amino-acid polypeptide reads, in one-letter code: Glycerol-3-phosphate acyltransferase (213 aa).

6 helical membrane-spanning segments follow: residues 3–23 (IIILLLIASYLLGAIPFGLWI), 48–68 (ILGVKAGIAVFIFDLLKGTLA), 71–91 (LPLIFHINGVSPLIFGLLAVI), 119–139 (PFFLLYLLVIFILVLWLFSMI), 144–164 (VVAAIFALLGILIFPSFGFIL), and 165–185 (TSYDLLFSIIIFALAIIIIFR).

Belongs to the PlsY family. Probably interacts with PlsX.

It localises to the cell membrane. The enzyme catalyses an acyl phosphate + sn-glycerol 3-phosphate = a 1-acyl-sn-glycero-3-phosphate + phosphate. The protein operates within lipid metabolism; phospholipid metabolism. Catalyzes the transfer of an acyl group from acyl-phosphate (acyl-PO(4)) to glycerol-3-phosphate (G3P) to form lysophosphatidic acid (LPA). This enzyme utilizes acyl-phosphate as fatty acyl donor, but not acyl-CoA or acyl-ACP. The sequence is that of Glycerol-3-phosphate acyltransferase from Lactococcus lactis subsp. cremoris (strain SK11).